Here is a 101-residue protein sequence, read N- to C-terminus: MAIDLFCYLSIDRGAAESDLNKIRSNHSELFEGKFLISPVRDADFSLKEIAAEHGLVAESFFLVSLNDKNSADLIPIVSKILVDGFNGGAILILQDNEYRR.

As to quaternary structure, specifically interacts with the truncated CT fragment of cognate toxin protein CdiA-2, which inhibits CdiA-2 tRNA nuclease activity.

Immunity protein component of a toxin-immunity protein module, which functions as a cellular contact-dependent growth inhibition (CDI) system. CDI modules allow bacteria to communicate with and inhibit the growth of closely related neighboring bacteria in a contact-dependent fashion. Neutralizes the toxic activity of cognate toxin CdiA (C-terminal 301 residue CT fragment) upon expression in E.coli. Does not inhibit toxic activity of CdiA from other strains of B.pseudomallei. Functionally, expression of this cdiAIB locus in B.thailandensis confers protection against other bacteria carrying the locus; growth inhibition requires cellular contact. This Burkholderia pseudomallei (strain 1026b) protein is Immunity protein CdiI-2 (cdiI2).